Reading from the N-terminus, the 175-residue chain is Large ribosomal subunit protein uL10 (175 aa).

The protein belongs to the universal ribosomal protein uL10 family. Part of the ribosomal stalk of the 50S ribosomal subunit. The N-terminus interacts with L11 and the large rRNA to form the base of the stalk. The C-terminus forms an elongated spine to which L12 dimers bind in a sequential fashion forming a multimeric L10(L12)X complex.

Forms part of the ribosomal stalk, playing a central role in the interaction of the ribosome with GTP-bound translation factors. This is Large ribosomal subunit protein uL10 from Prochlorococcus marinus (strain SARG / CCMP1375 / SS120).